A 1022-amino-acid chain; its full sequence is Sodium/potassium-transporting ATPase subunit alpha-1 (1022 aa).

A propeptide spanning residues 1–5 (MGRGT) is cleaved from the precursor. Residues 1 to 10 (MGRGTGHDQY) are compositionally biased toward basic and acidic residues. A disordered region spans residues 1-34 (MGRGTGHDQYELAATSEGGRKKKRDKKKKDMDDL). The Cytoplasmic portion of the chain corresponds to 6–86 (GHDQYELAAT…NALTPPPTTP (81 aa)). A Phosphoserine; by PKC modification is found at Ser16. The interval 81 to 83 (PPP) is interaction with phosphoinositide-3 kinase. The chain crosses the membrane as a helical span at residues 87 to 107 (EWVKFCRQLFGGFSMLLWIGA). Topologically, residues 108 to 130 (ILCFLAYGIQAASEDEPANDNLY) are extracellular. The helical transmembrane segment at 131-151 (LGVVLSAVVIITGCFSYYQEA) threads the bilayer. Residues 152–287 (KSSRIMDSFK…VGRTPISIEI (136 aa)) are Cytoplasmic-facing. The tract at residues 213-234 (DNSSLTGESEPQTRSPDFSNEN) is disordered. Residues 288–307 (EHFIHIITGVAVFLGVSFFI) form a helical membrane-spanning segment. Residues 308–319 (LSLILGYAWLEA) are Extracellular-facing. The helical transmembrane segment at 320–337 (VIFLIGIIVANVPEGLLA) threads the bilayer. The Cytoplasmic portion of the chain corresponds to 338–771 (TVTVCLTLTA…EEGRLIFDNL (434 aa)). Asp375 serves as the catalytic 4-aspartylphosphate intermediate. Lys486 contacts ATP. Mg(2+) contacts are provided by Asp716 and Asp720. The helical transmembrane segment at 772–791 (KKSIAYTLTSNIPEITPFLL) threads the bilayer. The Extracellular portion of the chain corresponds to 792-801 (FIIANIPLPL). Residues 802-822 (GTVTILCIDLGTDMVPAISLA) form a helical membrane-spanning segment. Over 823–842 (YEAAESDIMKRQPRNPRTDK) the chain is Cytoplasmic. A helical membrane pass occupies residues 843 to 865 (LVNERLISIAYGQIGMMQATAGF). At 866–917 (FTYFVILAENGFLPSTLLGIRVKWDDKYVNDLEDSYGQQWTYEQRKIVEYTC) the chain is on the extracellular side. The helical transmembrane segment at 918–937 (HTSFFASIVIVQWADLIICK) threads the bilayer. Over 938–950 (TRRNSIIQQGMKN) the chain is Cytoplasmic. Ser942 carries the phosphoserine; by PKA modification. The chain crosses the membrane as a helical span at residues 951 to 969 (KILIFGLFEETALAAFLSY). Residues 970-984 (CPGMDVALRMYPLKP) are Extracellular-facing. The helical transmembrane segment at 985 to 1005 (SWWFCAFPYSLLIFLYDEARR) threads the bilayer. Topologically, residues 1006–1022 (FILRRNPDGWVERETYY) are cytoplasmic.

This sequence belongs to the cation transport ATPase (P-type) (TC 3.A.3) family. Type IIC subfamily. As to quaternary structure, the sodium/potassium-transporting ATPase is composed of a catalytic alpha subunit, an auxiliary non-catalytic beta subunit and an additional regulatory subunit.

The protein resides in the cell membrane. Its subcellular location is the sarcolemma. It catalyses the reaction K(+)(out) + Na(+)(in) + ATP + H2O = K(+)(in) + Na(+)(out) + ADP + phosphate + H(+). This is the catalytic component of the active enzyme, which catalyzes the hydrolysis of ATP coupled with the exchange of sodium and potassium ions across the plasma membrane. This action creates the electrochemical gradient of sodium and potassium ions, providing the energy for active transport of various nutrients. The sequence is that of Sodium/potassium-transporting ATPase subunit alpha-1 (atp1a1) from Anguilla anguilla (European freshwater eel).